A 401-amino-acid polypeptide reads, in one-letter code: Acetate kinase (401 aa).

Asparagine 7 is a binding site for Mg(2+). Residue lysine 14 coordinates ATP. Position 91 (arginine 91) interacts with substrate. The active-site Proton donor/acceptor is aspartate 148. ATP contacts are provided by residues 208 to 212 (HLGNG), 283 to 285 (DFR), and 332 to 336 (GVGEN). A Mg(2+)-binding site is contributed by glutamate 385.

This sequence belongs to the acetokinase family. Homodimer. Requires Mg(2+) as cofactor. It depends on Mn(2+) as a cofactor.

The protein localises to the cytoplasm. It carries out the reaction acetate + ATP = acetyl phosphate + ADP. It functions in the pathway metabolic intermediate biosynthesis; acetyl-CoA biosynthesis; acetyl-CoA from acetate: step 1/2. In terms of biological role, catalyzes the formation of acetyl phosphate from acetate and ATP. Can also catalyze the reverse reaction. In Thermoanaerobacter pseudethanolicus (strain ATCC 33223 / 39E) (Clostridium thermohydrosulfuricum), this protein is Acetate kinase.